The primary structure comprises 452 residues: Adenylyltransferase and sulfurtransferase MOCS3 (452 aa).

ATP is bound by residues glycine 99, aspartate 120, 127-131 (SNLHR), lysine 144, and 188-189 (DN). Cysteine 230 and cysteine 233 together coordinate Zn(2+). The active-site Glycyl thioester intermediate; for adenylyltransferase activity is cysteine 247. Zn(2+) contacts are provided by cysteine 305 and cysteine 308. Residues 354 to 450 (KTKAHLLLDV…WTNQVDQSFP (97 aa)) enclose the Rhodanese domain. Catalysis depends on cysteine 409, which acts as the Cysteine persulfide intermediate; for sulfurtransferase activity.

This sequence in the N-terminal section; belongs to the HesA/MoeB/ThiF family. UBA4 subfamily. Requires Zn(2+) as cofactor.

It is found in the cytoplasm. It localises to the cytosol. It carries out the reaction [molybdopterin-synthase sulfur-carrier protein]-C-terminal Gly-Gly + ATP + H(+) = [molybdopterin-synthase sulfur-carrier protein]-C-terminal Gly-Gly-AMP + diphosphate. The catalysed reaction is [molybdopterin-synthase sulfur-carrier protein]-C-terminal Gly-Gly-AMP + S-sulfanyl-L-cysteinyl-[cysteine desulfurase] + AH2 = [molybdopterin-synthase sulfur-carrier protein]-C-terminal-Gly-aminoethanethioate + L-cysteinyl-[cysteine desulfurase] + A + AMP + 2 H(+). The protein operates within tRNA modification; 5-methoxycarbonylmethyl-2-thiouridine-tRNA biosynthesis. Its pathway is cofactor biosynthesis; molybdopterin biosynthesis. Its function is as follows. Plays a central role in 2-thiolation of mcm(5)S(2)U at tRNA wobble positions of cytosolic tRNA(Lys), tRNA(Glu) and tRNA(Gln). Also essential during biosynthesis of the molybdenum cofactor. Acts by mediating the C-terminal thiocarboxylation of sulfur carriers URM1 and MOCS2A. Its N-terminus first activates URM1 and MOCS2A as acyl-adenylates (-COAMP), then the persulfide sulfur on the catalytic cysteine is transferred to URM1 and MOCS2A to form thiocarboxylation (-COSH) of their C-terminus. The reaction probably involves hydrogen sulfide that is generated from the persulfide intermediate and that acts as a nucleophile towards URM1 and MOCS2A. Subsequently, a transient disulfide bond is formed. Does not use thiosulfate as sulfur donor; NFS1 probably acting as a sulfur donor for thiocarboxylation reactions. The protein is Adenylyltransferase and sulfurtransferase MOCS3 of Drosophila virilis (Fruit fly).